The primary structure comprises 313 residues: Ubiquitin-conjugating enzyme E2 Z (313 aa).

Residues 58–212 (QCVLRIKRDI…IRHETIRVAV (155 aa)) form the UBC core domain. Cysteine 147 acts as the Glycyl thioester intermediate in catalysis. Positions 283–313 (VREKHRKETVDIDSDSSSSETETDTQGSSNP) are disordered. Residues 297–313 (DSSSSETETDTQGSSNP) show a composition bias toward low complexity.

The protein belongs to the ubiquitin-conjugating enzyme family.

The protein resides in the cytoplasm. It localises to the nucleus. The catalysed reaction is S-ubiquitinyl-[E1 ubiquitin-activating enzyme]-L-cysteine + [E2 ubiquitin-conjugating enzyme]-L-cysteine = [E1 ubiquitin-activating enzyme]-L-cysteine + S-ubiquitinyl-[E2 ubiquitin-conjugating enzyme]-L-cysteine.. Its pathway is protein modification; protein ubiquitination. In terms of biological role, catalyzes the covalent attachment of ubiquitin to other proteins. May be involved in apoptosis regulation. The chain is Ubiquitin-conjugating enzyme E2 Z (ube2z) from Xenopus tropicalis (Western clawed frog).